Consider the following 346-residue polypeptide: FAS-associated factor 2 (346 aa).

N6-acetyllysine is present on Lys-68. The stretch at 176-251 forms a coiled coil; sequence SERLEREERN…EEKERKLECL (76 aa). The segment at 200 to 262 is disordered; it reads ASLRADQEKE…PEPSPDDPDS (63 aa). Positions 204–249 are enriched in basic and acidic residues; it reads ADQEKERKKREERERKRRKEEEVQQQKLAEERRRQNLQEEKERKLE. The UBX domain occupies 258 to 340; it reads DDPDSVKIIF…GLSHTEVLFV (83 aa).

Identified in a complex that contains SEL1L, OS9, FAF2/UBXD8, UBE2J1/UBC6E and AUP1. Interacts with YOD1. Interacts (via N-terminus) with UBQLN2 (via C-terminus). Interacts with PNPLA2 and UBAC2. Interacts with ZFAND2B; probably through VCP. Interacts with LMBR1L.

The protein resides in the cytoplasm. Its subcellular location is the lipid droplet. It is found in the endoplasmic reticulum. In terms of biological role, plays an important role in endoplasmic reticulum-associated degradation (ERAD) that mediates ubiquitin-dependent degradation of misfolded endoplasmic reticulum proteins. By controlling the steady-state expression of the IGF1R receptor, indirectly regulates the insulin-like growth factor receptor signaling pathway. Involved in inhibition of lipid droplet degradation by binding to phospholipase PNPL2 and inhibiting its activity by promoting dissociation of PNPL2 from its endogenous activator, ABHD5 which inhibits the rate of triacylglycerol hydrolysis. Involved in stress granule disassembly: associates with ubiquitinated G3BP1 in response to heat shock, thereby promoting interaction between ubiquitinated G3BP1 and VCP, followed by G3BP1 extraction from stress granules and stress granule disassembly. This chain is FAS-associated factor 2 (Faf2), found in Rattus norvegicus (Rat).